We begin with the raw amino-acid sequence, 298 residues long: tRNA pseudouridine synthase B (298 aa).

The active-site Nucleophile is Asp39.

It belongs to the pseudouridine synthase TruB family. Type 1 subfamily.

It catalyses the reaction uridine(55) in tRNA = pseudouridine(55) in tRNA. Functionally, responsible for synthesis of pseudouridine from uracil-55 in the psi GC loop of transfer RNAs. This Oenococcus oeni (strain ATCC BAA-331 / PSU-1) protein is tRNA pseudouridine synthase B.